We begin with the raw amino-acid sequence, 548 residues long: Tyrosine-protein phosphatase non-receptor type 61F (548 aa).

The Cytoplasmic segment spans residues 1-525 (MSEQKTSGSG…KQLAAKKRRS (525 aa)). The 264-residue stretch at 33–296 (FYKEICETCD…DFSYQAIIEG (264 aa)) folds into the Tyrosine-protein phosphatase domain. A disordered region spans residues 46–65 (KEKQFSTSESERHTNRGLNR). Phosphoserine is present on Ser83. Phosphotyrosine is present on Tyr86. Substrate is bound by residues Asp203, 237 to 243 (CSAGIGR), and Gln281. Cys237 functions as the Phosphocysteine intermediate in the catalytic mechanism. Short sequence motifs (PXXP motif (SH3-binding)) lie at residues 327 to 330 (PPLP), 339 to 342 (PLAP), and 394 to 397 (PPLP). Residues 386-517 (EVADSRPLPP…RKQRENEDKQ (132 aa)) form a disordered region. A compositionally biased stretch (acidic residues) spans 404 to 428 (SDSDEDYLLDDDDEDDTDEDEEYET). 2 consecutive short sequence motifs (PXXP motif (SH3-binding)) follow at residues 459–462 (PAVP) and 480–483 (PASP). The span at 502–517 (KVNDMKRKQRENEDKQ) shows a compositional bias: basic and acidic residues. Residues 526–545 (LLTYIAAGVVVGVICAYAYT) form a helical membrane-spanning segment. The Extracellular portion of the chain corresponds to 546–548 (KLG).

The protein belongs to the protein-tyrosine phosphatase family. Non-receptor class 1 subfamily. Interacts (via C-terminus) with dock/dreadlocks; this interaction is independent of insulin stimulation and is required for dephosphorylation of the insulin-like receptor InR.

Its subcellular location is the cytoplasm. The protein resides in the membrane. The protein localises to the endomembrane system. It is found in the nucleus. The enzyme catalyses O-phospho-L-tyrosyl-[protein] + H2O = L-tyrosyl-[protein] + phosphate. Functionally, non-receptor protein tyrosine phosphatase. Required for maintaining dock/dreadlocks in its non-phosphorylated state. Negative regulator of InR/insulin-like receptor signaling through dephosphorylation of tyrosines when recruited by dock/dreadlocks. The polypeptide is Tyrosine-protein phosphatase non-receptor type 61F (Drosophila melanogaster (Fruit fly)).